A 189-amino-acid chain; its full sequence is Urease accessory protein UreF (189 aa).

Belongs to the UreF family. UreD, UreF and UreG form a complex that acts as a GTP-hydrolysis-dependent molecular chaperone, activating the urease apoprotein by helping to assemble the nickel containing metallocenter of UreC. The UreE protein probably delivers the nickel.

The protein resides in the cytoplasm. Its function is as follows. Required for maturation of urease via the functional incorporation of the urease nickel metallocenter. The chain is Urease accessory protein UreF from Staphylococcus xylosus.